The chain runs to 94 residues: UPF0358 protein Bcer98_2651 (94 aa).

Belongs to the UPF0358 family.

The sequence is that of UPF0358 protein Bcer98_2651 from Bacillus cytotoxicus (strain DSM 22905 / CIP 110041 / 391-98 / NVH 391-98).